The primary structure comprises 268 residues: Minor capsid protein VP2 (268 aa).

The span at 132 to 144 shows a compositional bias: polar residues; the sequence is STPQSLGALTGRT. The segment at 132 to 199 is disordered; it reads STPQSLGALT…SLSSAARTRS (68 aa). A compositionally biased stretch (low complexity) spans 145–163; that stretch reads NSRVSAPARSSPSALSNAP. Polar residues predominate over residues 164-178; the sequence is TATSLHSNQTVSTRL. Residues 179–195 show a composition bias toward low complexity; it reads GSSAGSGTGVSSLSSAA.

Belongs to the norovirus VP2 family. In terms of assembly, homooligomer. The portal-like structure consists in 12 copies of VP2. Interacts with capsid protein VP1.

Its subcellular location is the virion. The protein localises to the host cytoplasm. Functionally, minor structural protein that forms a portal-like structure at a unique three-fold axis of symmetry, following binding to the host receptor. The channel formed by VP2 may allow the delivery of the viral genome through the host endosomal membrane. The sequence is that of Minor capsid protein VP2 from Lordsdale virus (strain GII/Human/United Kingdom/Lordsdale/1993) (Human enteric calicivirus).